Here is a 199-residue protein sequence, read N- to C-terminus: Prolactin-2 (199 aa).

3 disulfides stabilise this stretch: Cys-4–Cys-11, Cys-58–Cys-174, and Cys-191–Cys-199.

This sequence belongs to the somatotropin/prolactin family.

It is found in the secreted. In Crocodylus novaeguineae (Crocodile), this protein is Prolactin-2.